Consider the following 165-residue polypeptide: Phosphopantetheine adenylyltransferase (165 aa).

Ser10 serves as a coordination point for substrate. Residues 10–11 and His18 contribute to the ATP site; that span reads SF. Substrate is bound by residues Lys42, Leu74, and Arg88. ATP is bound by residues 89 to 91, Glu99, and 124 to 130; these read GLR and YSFISSS.

Belongs to the bacterial CoaD family. As to quaternary structure, homohexamer. The cofactor is Mg(2+).

The protein localises to the cytoplasm. It carries out the reaction (R)-4'-phosphopantetheine + ATP + H(+) = 3'-dephospho-CoA + diphosphate. It participates in cofactor biosynthesis; coenzyme A biosynthesis; CoA from (R)-pantothenate: step 4/5. Reversibly transfers an adenylyl group from ATP to 4'-phosphopantetheine, yielding dephospho-CoA (dPCoA) and pyrophosphate. In Macrococcus caseolyticus (strain JCSC5402) (Macrococcoides caseolyticum), this protein is Phosphopantetheine adenylyltransferase.